The primary structure comprises 405 residues: Arginine deiminase (405 aa).

The active-site Amidino-cysteine intermediate is cysteine 395.

The protein belongs to the arginine deiminase family.

It is found in the cytoplasm. The enzyme catalyses L-arginine + H2O = L-citrulline + NH4(+). Its pathway is amino-acid degradation; L-arginine degradation via ADI pathway; carbamoyl phosphate from L-arginine: step 1/2. The protein is Arginine deiminase of Rhodococcus opacus (strain B4).